The chain runs to 485 residues: Membrane-bound lytic murein transglycosylase F (485 aa).

A signal peptide spans 1 to 29 (MFAHTALRQRCAKWLLATGLFLLLGACVE). Residues 30–267 (KPSTLERVKE…RLKDRYYGHV (238 aa)) are non-LT domain. The tract at residues 268–485 (DVLGYVGAYT…DKPADKSSPM (218 aa)) is LT domain. E314 is a catalytic residue. The tract at residues 465–485 (EGNLHVPGVNKDKPADKSSPM) is disordered. The segment covering 474-485 (NKDKPADKSSPM) has biased composition (basic and acidic residues).

The protein in the N-terminal section; belongs to the bacterial solute-binding protein 3 family. This sequence in the C-terminal section; belongs to the transglycosylase Slt family.

It localises to the cell outer membrane. The enzyme catalyses Exolytic cleavage of the (1-&gt;4)-beta-glycosidic linkage between N-acetylmuramic acid (MurNAc) and N-acetylglucosamine (GlcNAc) residues in peptidoglycan, from either the reducing or the non-reducing ends of the peptidoglycan chains, with concomitant formation of a 1,6-anhydrobond in the MurNAc residue.. Murein-degrading enzyme that degrades murein glycan strands and insoluble, high-molecular weight murein sacculi, with the concomitant formation of a 1,6-anhydromuramoyl product. Lytic transglycosylases (LTs) play an integral role in the metabolism of the peptidoglycan (PG) sacculus. Their lytic action creates space within the PG sacculus to allow for its expansion as well as for the insertion of various structures such as secretion systems and flagella. The chain is Membrane-bound lytic murein transglycosylase F from Pseudomonas putida (strain ATCC 700007 / DSM 6899 / JCM 31910 / BCRC 17059 / LMG 24140 / F1).